The primary structure comprises 93 residues: UPF0250 protein PA3998 (93 aa).

Belongs to the UPF0250 family.

The sequence is that of UPF0250 protein PA3998 from Pseudomonas aeruginosa (strain ATCC 15692 / DSM 22644 / CIP 104116 / JCM 14847 / LMG 12228 / 1C / PRS 101 / PAO1).